A 294-amino-acid polypeptide reads, in one-letter code: Acetylglutamate kinase (294 aa).

Substrate-binding positions include 47 to 48 (GG), Arg69, and Asn168.

The protein belongs to the acetylglutamate kinase family. ArgB subfamily.

Its subcellular location is the cytoplasm. It catalyses the reaction N-acetyl-L-glutamate + ATP = N-acetyl-L-glutamyl 5-phosphate + ADP. It functions in the pathway amino-acid biosynthesis; L-arginine biosynthesis; N(2)-acetyl-L-ornithine from L-glutamate: step 2/4. Functionally, catalyzes the ATP-dependent phosphorylation of N-acetyl-L-glutamate. The protein is Acetylglutamate kinase of Corynebacterium glutamicum (strain ATCC 13032 / DSM 20300 / JCM 1318 / BCRC 11384 / CCUG 27702 / LMG 3730 / NBRC 12168 / NCIMB 10025 / NRRL B-2784 / 534).